We begin with the raw amino-acid sequence, 476 residues long: Adenosylhomocysteinase (476 aa).

Residues Thr-67, Asp-142, and Glu-202 each contribute to the substrate site. Position 203–205 (203–205) interacts with NAD(+); it reads TTT. Residues Lys-232 and Asp-236 each coordinate substrate. Residues Asn-237, 266–271, Glu-289, Asn-324, 345–347, and Asn-390 each bind NAD(+); these read GYGDVG and IGH.

The protein belongs to the adenosylhomocysteinase family. NAD(+) serves as cofactor.

Its subcellular location is the cytoplasm. The catalysed reaction is S-adenosyl-L-homocysteine + H2O = L-homocysteine + adenosine. Its pathway is amino-acid biosynthesis; L-homocysteine biosynthesis; L-homocysteine from S-adenosyl-L-homocysteine: step 1/1. In terms of biological role, may play a key role in the regulation of the intracellular concentration of adenosylhomocysteine. In Prochlorococcus marinus (strain MIT 9303), this protein is Adenosylhomocysteinase.